A 149-amino-acid polypeptide reads, in one-letter code: Protein TraJ (149 aa).

Its subcellular location is the cell membrane. Functionally, this protein is essential for positively regulating the expression of transfer genes that are involved in the conjugal transfer of DNA between bacterial cells. This Escherichia coli protein is Protein TraJ (traJ).